Here is a 206-residue protein sequence, read N- to C-terminus: Small ribosomal subunit protein uS4 (206 aa).

In terms of domain architecture, S4 RNA-binding spans 96-156 (GRLDNVVYRM…EKAKKQARIK (61 aa)).

The protein belongs to the universal ribosomal protein uS4 family. As to quaternary structure, part of the 30S ribosomal subunit. Contacts protein S5. The interaction surface between S4 and S5 is involved in control of translational fidelity.

In terms of biological role, one of the primary rRNA binding proteins, it binds directly to 16S rRNA where it nucleates assembly of the body of the 30S subunit. With S5 and S12 plays an important role in translational accuracy. The polypeptide is Small ribosomal subunit protein uS4 (Aeromonas hydrophila subsp. hydrophila (strain ATCC 7966 / DSM 30187 / BCRC 13018 / CCUG 14551 / JCM 1027 / KCTC 2358 / NCIMB 9240 / NCTC 8049)).